A 547-amino-acid polypeptide reads, in one-letter code: Chaperonin GroEL 3 (547 aa).

ATP contacts are provided by residues 30 to 33 (TLGP), K51, 87 to 91 (DGTTT), G415, and D496.

It belongs to the chaperonin (HSP60) family. As to quaternary structure, forms a cylinder of 14 subunits composed of two heptameric rings stacked back-to-back. Interacts with the co-chaperonin GroES.

The protein resides in the cytoplasm. It catalyses the reaction ATP + H2O + a folded polypeptide = ADP + phosphate + an unfolded polypeptide.. Its function is as follows. Together with its co-chaperonin GroES, plays an essential role in assisting protein folding. The GroEL-GroES system forms a nano-cage that allows encapsulation of the non-native substrate proteins and provides a physical environment optimized to promote and accelerate protein folding. In Bradyrhizobium sp. (strain ORS 278), this protein is Chaperonin GroEL 3.